The primary structure comprises 414 residues: MIOREX complex component 10 (414 aa).

The N-terminal 29 residues, 1–29, are a transit peptide targeting the mitochondrion; that stretch reads MLSFRSLTSTFGFVSRFQIRRLGTSLSIQ. The Mitochondrial matrix portion of the chain corresponds to 30–373; the sequence is NLEVQDGRWK…ISLLNERNST (344 aa). Residues 374–394 traverse the membrane as a helical segment; the sequence is FLEWIIIYLIAFELCFEIYHF. The Mitochondrial intermembrane portion of the chain corresponds to 395–414; it reads YQKYSSYCSEPTNDDLDATK.

It belongs to the RMD1/sif2 family. In terms of assembly, associates with the mitochondrial ribosome.

The protein resides in the mitochondrion inner membrane. Functionally, component of MIOREX complexes, large expressome-like assemblies of ribosomes with factors involved in all the steps of post-transcriptional gene expression. This chain is MIOREX complex component 10, found in Saccharomyces cerevisiae (strain ATCC 204508 / S288c) (Baker's yeast).